The chain runs to 545 residues: MAKEILFNIDARDQLKKGVDALANAVKVTLGPKGRNVIIEKKFGAPHITKDGVTVAKEIELADAYQNTGAQLVKEVASKTGDDAGDGTTTATVLAQAIVAEGLKNVTAGASPMDIKRGIDKAVAKVVESIKAQAETVGDNYDKIEQVATVSANNDPVIGKLIADAMRKVSKDGVITIEEAKGTDTTIGVVEGMQFDRGYLSAYFVTNTEKMECEMEKPYILIYDKKISNLKDFLPILEPAVQTGRPLLVIAEDVDSEALTTLVVNRLRSQLKICAVKAPGFGDRRKEMLEDIAILTGGVVISEEKGLKLEQATIEMLGTADKVTVSKDYTTIVNGAGVKENIKERCDQIKAQIVATKSDYDREKLQERLAKLSGGVAVLYVGAASEVEMKEKKDRVDDALRATRAAIEEGIIPGGGVAYIRAIDSLEGMKGDNADETTGIGIIKRAIEEPLREIVANAGKEGAVVVQKVREGKGDFGYNARTDVYENLHAAGVVDPAKVARVALENAASIAGMFLTTECVIVEKKEDKPEMPMGAPGMGGMGGMM.

ATP is bound by residues 29-32 (TLGP), lysine 50, 86-90 (DGTTT), glycine 415, and aspartate 495.

The protein belongs to the chaperonin (HSP60) family. In terms of assembly, forms a cylinder of 14 subunits composed of two heptameric rings stacked back-to-back. Interacts with the co-chaperonin GroES.

The protein localises to the cytoplasm. The catalysed reaction is ATP + H2O + a folded polypeptide = ADP + phosphate + an unfolded polypeptide.. Its function is as follows. Together with its co-chaperonin GroES, plays an essential role in assisting protein folding. The GroEL-GroES system forms a nano-cage that allows encapsulation of the non-native substrate proteins and provides a physical environment optimized to promote and accelerate protein folding. In Bacteroides thetaiotaomicron (strain ATCC 29148 / DSM 2079 / JCM 5827 / CCUG 10774 / NCTC 10582 / VPI-5482 / E50), this protein is Chaperonin GroEL.